The sequence spans 479 residues: Aspartyl/glutamyl-tRNA(Asn/Gln) amidotransferase subunit B (479 aa).

This sequence belongs to the GatB/GatE family. GatB subfamily. In terms of assembly, heterotrimer of A, B and C subunits.

It carries out the reaction L-glutamyl-tRNA(Gln) + L-glutamine + ATP + H2O = L-glutaminyl-tRNA(Gln) + L-glutamate + ADP + phosphate + H(+). The enzyme catalyses L-aspartyl-tRNA(Asn) + L-glutamine + ATP + H2O = L-asparaginyl-tRNA(Asn) + L-glutamate + ADP + phosphate + 2 H(+). Allows the formation of correctly charged Asn-tRNA(Asn) or Gln-tRNA(Gln) through the transamidation of misacylated Asp-tRNA(Asn) or Glu-tRNA(Gln) in organisms which lack either or both of asparaginyl-tRNA or glutaminyl-tRNA synthetases. The reaction takes place in the presence of glutamine and ATP through an activated phospho-Asp-tRNA(Asn) or phospho-Glu-tRNA(Gln). This chain is Aspartyl/glutamyl-tRNA(Asn/Gln) amidotransferase subunit B, found in Streptococcus pyogenes serotype M4 (strain MGAS10750).